A 368-amino-acid chain; its full sequence is Peptide chain release factor 2 (368 aa).

Gln250 carries the post-translational modification N5-methylglutamine.

Belongs to the prokaryotic/mitochondrial release factor family. Post-translationally, methylated by PrmC. Methylation increases the termination efficiency of RF2.

It localises to the cytoplasm. Functionally, peptide chain release factor 2 directs the termination of translation in response to the peptide chain termination codons UGA and UAA. The sequence is that of Peptide chain release factor 2 from Rickettsia conorii (strain ATCC VR-613 / Malish 7).